Reading from the N-terminus, the 94-residue chain is Large ribosomal subunit protein eL42 (94 aa).

Residues cysteine 11, cysteine 14, cysteine 71, and cysteine 74 each contribute to the Zn(2+) site. The segment at cysteine 11–cysteine 74 adopts a C4-type zinc-finger fold.

The protein belongs to the eukaryotic ribosomal protein eL42 family. Part of the 50S ribosomal subunit. The cofactor is Zn(2+).

Binds to the 23S rRNA. The chain is Large ribosomal subunit protein eL42 from Pyrococcus abyssi (strain GE5 / Orsay).